We begin with the raw amino-acid sequence, 440 residues long: Transposon Ty1-ML1 Gag polyprotein (440 aa).

3 stretches are compositionally biased toward polar residues: residues methionine 1–serine 23, threonine 48–serine 60, and glutamine 127–phenylalanine 152. Disordered stretches follow at residues methionine 1–glutamine 88, proline 126–proline 173, and glycine 352–tyrosine 440. Positions threonine 153–threonine 165 are enriched in low complexity. The interval asparagine 299–histidine 401 is RNA-binding. Over residues asparagine 402–serine 418 the composition is skewed to low complexity. Serine 416 is subject to Phosphoserine. Polar residues predominate over residues lysine 419 to asparagine 428. The span at asparagine 429–tyrosine 440 shows a compositional bias: basic and acidic residues.

Homotrimer.

It is found in the cytoplasm. In terms of biological role, capsid protein (CA) is the structural component of the virus-like particle (VLP), forming the shell that encapsulates the retrotransposons dimeric RNA genome. The particles are assembled from trimer-clustered units and there are holes in the capsid shells that allow for the diffusion of macromolecules. CA also has nucleocapsid-like chaperone activity, promoting primer tRNA(i)-Met annealing to the multipartite primer-binding site (PBS), dimerization of Ty1 RNA and initiation of reverse transcription. The polypeptide is Transposon Ty1-ML1 Gag polyprotein (TY1A-ML1) (Saccharomyces cerevisiae (strain ATCC 204508 / S288c) (Baker's yeast)).